Here is a 759-residue protein sequence, read N- to C-terminus: Protein hunchback (759 aa).

2 disordered regions span residues 30–51 (EPGH…PIPS) and 171–215 (SSEK…EDMK). A compositionally biased stretch (polar residues) spans 39–51 (SVASSPRQSPIPS). The residue at position 179 (T179) is a Phosphothreonine. 4 positions are modified to phosphoserine: S189, S208, S210, and S211. A compositionally biased stretch (basic and acidic residues) spans 199–215 (EPEKEHDQMSNSSEDMK). C2H2-type zinc fingers lie at residues 241-263 (YKCK…TRTH), 270-292 (LQCP…IRKH), 298-320 (FQCD…RKSH), and 326-350 (YRCA…KYGH). Disordered regions lie at residues 366-419 (LVID…TSQL), 513-565 (QLQQ…PQQP), and 606-696 (MTSP…APAS). 2 stretches are compositionally biased toward low complexity: residues 399 to 419 (VAAV…TSQL) and 513 to 522 (QLQQQNQQQS). Residues 523 to 532 (DNEEEEQDDE) show a composition bias toward acidic residues. Residues S537 and S540 each carry the phosphoserine modification. Residues 655–696 (ANTSASSTASSSGNSSNASSNGNSSSNSSSNGTSSAAAAPAS) show a composition bias toward low complexity. 2 consecutive C2H2-type zinc fingers follow at residues 706 to 728 (YECK…MGYH) and 734 to 758 (FKCN…RNAH).

Belongs to the hunchback C2H2-type zinc-finger protein family.

It is found in the nucleus. In terms of biological role, gap class segmentation protein that controls development of head structures. The protein is Protein hunchback of Drosophila yakuba (Fruit fly).